The sequence spans 722 residues: Glycine--tRNA ligase beta subunit (722 aa).

It belongs to the class-II aminoacyl-tRNA synthetase family. As to quaternary structure, tetramer of two alpha and two beta subunits.

It localises to the cytoplasm. The enzyme catalyses tRNA(Gly) + glycine + ATP = glycyl-tRNA(Gly) + AMP + diphosphate. The protein is Glycine--tRNA ligase beta subunit of Haemophilus influenzae (strain 86-028NP).